A 417-amino-acid polypeptide reads, in one-letter code: NADH-quinone oxidoreductase subunit D (417 aa).

This sequence belongs to the complex I 49 kDa subunit family. NDH-1 is composed of 14 different subunits. Subunits NuoB, C, D, E, F, and G constitute the peripheral sector of the complex.

It is found in the cell inner membrane. The enzyme catalyses a quinone + NADH + 5 H(+)(in) = a quinol + NAD(+) + 4 H(+)(out). Its function is as follows. NDH-1 shuttles electrons from NADH, via FMN and iron-sulfur (Fe-S) centers, to quinones in the respiratory chain. The immediate electron acceptor for the enzyme in this species is believed to be ubiquinone. Couples the redox reaction to proton translocation (for every two electrons transferred, four hydrogen ions are translocated across the cytoplasmic membrane), and thus conserves the redox energy in a proton gradient. This is NADH-quinone oxidoreductase subunit D from Paraburkholderia xenovorans (strain LB400).